Here is a 368-residue protein sequence, read N- to C-terminus: DNA replication and repair protein RecF (368 aa).

30–37 (GRNGSGKT) provides a ligand contact to ATP.

The protein belongs to the RecF family.

It is found in the cytoplasm. Functionally, the RecF protein is involved in DNA metabolism; it is required for DNA replication and normal SOS inducibility. RecF binds preferentially to single-stranded, linear DNA. It also seems to bind ATP. In Chlorobaculum tepidum (strain ATCC 49652 / DSM 12025 / NBRC 103806 / TLS) (Chlorobium tepidum), this protein is DNA replication and repair protein RecF.